The chain runs to 217 residues: MSEPMMWLLVRGVWETLAMTFVSGFFGFVIGLPVGVLLYVTRPGQIIANAKLYRTVSAIVNIFRSIPFIILLVWMIPFTRVIVGTSIGLQAAIVPLTVGAAPFIARMVENALLEIPTGLIEASRAMGATPMQIVRKVLLPEALPGLVNAATITLITLVGYSAMGGAVGAGGLGQIGYQYGYIGYNATVMNTVLVLLVILVYLIQFAGDRIVRAVTRK.

Topologically, residues 1-19 (MSEPMMWLLVRGVWETLAM) are periplasmic. One can recognise an ABC transmembrane type-1 domain in the interval 13 to 204 (VWETLAMTFV…LLVILVYLIQ (192 aa)). Residues 20 to 40 (TFVSGFFGFVIGLPVGVLLYV) traverse the membrane as a helical segment. At 41–57 (TRPGQIIANAKLYRTVS) the chain is on the cytoplasmic side. The helical transmembrane segment at 58-78 (AIVNIFRSIPFIILLVWMIPF) threads the bilayer. Over 79 to 80 (TR) the chain is Periplasmic. Residues 81-101 (VIVGTSIGLQAAIVPLTVGAA) traverse the membrane as a helical segment. Over 102 to 151 (PFIARMVENALLEIPTGLIEASRAMGATPMQIVRKVLLPEALPGLVNAAT) the chain is Cytoplasmic. A helical membrane pass occupies residues 152–172 (ITLITLVGYSAMGGAVGAGGL). Residues 173 to 185 (GQIGYQYGYIGYN) lie on the Periplasmic side of the membrane. Residues 186 to 206 (ATVMNTVLVLLVILVYLIQFA) form a helical membrane-spanning segment. Over 207-217 (GDRIVRAVTRK) the chain is Cytoplasmic.

Belongs to the binding-protein-dependent transport system permease family. CysTW subfamily.

The protein resides in the cell inner membrane. Its function is as follows. Part of the binding-protein-dependent transport system for D-methionine and the toxic methionine analog alpha-methyl-methionine. Probably responsible for the translocation of the substrate across the membrane. (Microbial infection) Probably transports the toxic C-terminal region of CdiA from E.coli strain MHI813 across the inner membrane to the cytoplasm, where CdiA has a toxic effect. Toxin transport is strain-specific, mutations in this gene do not confer resistance to several other tested CdiA toxins. In Escherichia coli (strain K12), this protein is D-methionine transport system permease protein MetI (metI).